The chain runs to 355 residues: Chorismate synthase (355 aa).

Residue R48 participates in NADP(+) binding. FMN contacts are provided by residues 125-127 (RSS), 238-239 (NA), G278, 293-297 (KPASS), and R319.

The protein belongs to the chorismate synthase family. In terms of assembly, homotetramer. It depends on FMNH2 as a cofactor.

The catalysed reaction is 5-O-(1-carboxyvinyl)-3-phosphoshikimate = chorismate + phosphate. Its pathway is metabolic intermediate biosynthesis; chorismate biosynthesis; chorismate from D-erythrose 4-phosphate and phosphoenolpyruvate: step 7/7. In terms of biological role, catalyzes the anti-1,4-elimination of the C-3 phosphate and the C-6 proR hydrogen from 5-enolpyruvylshikimate-3-phosphate (EPSP) to yield chorismate, which is the branch point compound that serves as the starting substrate for the three terminal pathways of aromatic amino acid biosynthesis. This reaction introduces a second double bond into the aromatic ring system. This chain is Chorismate synthase, found in Baumannia cicadellinicola subsp. Homalodisca coagulata.